A 20-amino-acid chain; its full sequence is Unknown protein NF042 from 2D-PAGE (20 aa).

This chain is Unknown protein NF042 from 2D-PAGE, found in Naegleria fowleri (Brain eating amoeba).